The chain runs to 194 residues: Calcium channel flower (194 aa).

Transmembrane regions (helical) follow at residues 35–55 (LGIVAAFFAILFGLWNVFSII), 66–88 (IIQMVAGFVVMLLEALCCFVCFE), and 107–127 (GLYIAMAIPPIILCFGLASLF).

This sequence belongs to the calcium channel flower family. As to quaternary structure, homomultimer. Associates with the dally/ magu complex.

The protein resides in the cell membrane. It localises to the cytoplasmic vesicle. The protein localises to the secretory vesicle. Its subcellular location is the synaptic vesicle membrane. It is found in the presynaptic cell membrane. The protein resides in the endosome. With respect to regulation, channel activity is inhibited by La(3+), which reduces Ca(2+) influx and thus inhibits it's function in promoting activity-dependent bulk endocytosis (ADBE) in response to high stimuli. In terms of biological role, transmembrane protein which mediates synaptic endocytosis, fitness-based cell culling, neuronal culling, morphogen gradient scaling, and calcium transport. Regulates synaptic endocytosis and hence couples exo- with endocytosis. Controls two major modes of synaptic vesicle (SV) endocytosis in the synaptic boutons of neuromuscular junctions (NMJs); Ca(2+) channel-independent Clathrin-mediated endocytosis (CME) in response to mild stimulation, and Ca(2+) channel-dependent activity-dependent bulk endocytosis (ADBE) in response to strong stimulation. Functions in ADBE and subsequent SV reformation from bulk endosomes by initiating Ca(2+) channel-dependent phosphatidylinositol 4,5-bisphosphate (PtdIns(4,5)P2) compartmentalization in synaptic boutons. There it acts at the periactive zone to provide the low Ca(2+) levels required to initiate Calcineurin activation and upregulate PtdIns(4,5)P2. Conversely PtdIns(4,5)P2 enhances fwe Ca(2+) channel-activity, establishing a positive feedback loop that induces PtdIns(4,5)P2 microdomain at the periactive zone. These microdomains trigger bulk membrane invagination (i.e. ADBE) by triggering actin polymerization while also promoting localization of fwe to bulk endosomes, thereby removing the ADBE trigger to reduce endocytosis and prevent excess membrane uptake. PtdIns(4,5)P2 then promotes SV reformation from the bulk endosomes, to coordinate ADBE and subsequent SV reformation. Different combinations of the flower isoforms at the cell membrane are also required for the identification and elimination of suboptimal or supernumerary cells during development, regeneration, and adulthood. Required for the recognition and elimination of unfit cells in the developing wing during cell competition. In the developing pupal retina, mediates the elimination of unwanted postmitotic neurons, including supernumerary photoreceptor neurons that form at the periphery of the retina and are contained within incomplete ommatidia units. Also required for efficient elimination and replacement of old neurons by newly generated neurons during regeneration in the adult brain following mechanical injury. Downstream of the flower fitness fingerprints, cells identified as unwanted or unfit are eliminated via apoptosis through the expression of ahuizotl (azot). However, the cells marked for elimination by the flower isoforms only undergo apoptosis if additional thresholds are met; (1) their neighboring fit/healthy cells express different levels of the fwe isoforms, and (2) the levels of the protective signal SPARC expressed by the loser or unwanted cells are unable to inhibit caspase activation. These additional thresholds for flower-mediated apoptosis, allows useful cells to recover from transient and limited stress before they are unnecessarily eliminated. Functions with dally and magu in a mechanism of scaling, which utilises apoptosis to ensure that the dpp morphogen gradient, which mediates organ growth, remains proportional to the size of the growing wing. In this mechanism, fwe represses dally- and Magu-dependent activity in expanding the gradient, and dally/Magu inhibits fwe-dependent apoptosis to keep cell death rate low. When the levels of these different proteins are optimally regulated the gradient correctly scales with organ growth but when this fails, fwe-mediated apoptosis is activated to trim the developing tissue to match the correct size of the gradient. The chain is Calcium channel flower from Drosophila sechellia (Fruit fly).